A 153-amino-acid chain; its full sequence is ORM1-like protein 3 (153 aa).

Residues M1–M17 are important for ceramide level-sensing. The Cytoplasmic portion of the chain corresponds to M1–G21. Helical transmembrane passes span I22–F42 and V43–F63. The Cytoplasmic portion of the chain corresponds to L64 to Q94. Residues F95–T117 traverse the membrane as a helical segment. The Extracellular portion of the chain corresponds to K118–Q121. Residues V122–L142 traverse the membrane as a helical segment. P137 bears the Hydroxyproline mark. Residues H143 to Y153 lie on the Cytoplasmic side of the membrane.

This sequence belongs to the ORM family. As to quaternary structure, ceramide-sensitive subunit of the serine palmitoyltransferase (SPT) complex, which is also composed of SPTLC1, SPTLC2/3 and SPTSSA/B. In terms of processing, when hydroxylated at Pro-137, ubiquitinated via 'Lys-48'-linkage, leading to proteasomal degradation. In endothelial cells, ORMDL3 proteasomal degradation is controlled by the sphingosine 1-phosphate receptor signaling pathway.

It localises to the endoplasmic reticulum membrane. Plays an essential role in the homeostatic regulation of sphingolipid de novo biosynthesis by modulating the activity of the serine palmitoyltransferase (SPT) in response to ceramide levels. When complexed to SPT, the binding of ceramides to its N-terminus stabilizes a conformation that block SPT substrate entry, hence preventing SPT catalytic activity. Through this mechanism, maintains ceramide levels at sufficient concentrations for the production of complex sphingolipids, but which prevents the accumulation of ceramides to levels that trigger apoptosis. The sequence is that of ORM1-like protein 3 (Ormdl3) from Rattus norvegicus (Rat).